The primary structure comprises 272 residues: 2-amino-3,7-dideoxy-D-threo-hept-6-ulosonate synthase (272 aa).

Asp-33 (proton acceptor) is an active-site residue. Residues Asp-33 to Ser-37 and Tyr-153 to Arg-155 each bind 1-deoxy-D-threo-hexo-2,5-diulose 6-phosphate. Tyr-153 serves as the catalytic Proton donor. The active-site Schiff-base intermediate with substrate is the Lys-184. Residues Gly-209 to Gly-210 and Gly-237 to Arg-238 each bind 1-deoxy-D-threo-hexo-2,5-diulose 6-phosphate.

The protein belongs to the DeoC/FbaB aldolase family. ADHS subfamily. As to quaternary structure, homodecamer.

The catalysed reaction is 1-deoxy-D-threo-hexo-2,5-diulose 6-phosphate + L-aspartate 4-semialdehyde = 2,3-dioxopropyl phosphate + 2-amino-2,3,7-trideoxy-D-lyxo-hept-6-ulosonate. Its function is as follows. Catalyzes a transaldol reaction between 6-deoxy-5-ketofructose 1-phosphate (DKFP) and L-aspartate semialdehyde (ASA) with an elimination of hydroxypyruvaldehyde phosphate to yield 2-amino-3,7-dideoxy-D-threo-hept-6-ulosonate (ADH). Plays a key role in an alternative pathway of the biosynthesis of 3-dehydroquinate (DHQ), which is involved in the canonical pathway for the biosynthesis of aromatic amino acids. This is 2-amino-3,7-dideoxy-D-threo-hept-6-ulosonate synthase from Methanococcus maripaludis (strain C5 / ATCC BAA-1333).